The chain runs to 55 residues: uncharacterized protein (55 aa).

This is an uncharacterized protein from Rickettsia prowazekii (strain Madrid E).